The primary structure comprises 276 residues: NADPH-dependent 7-cyano-7-deazaguanine reductase (276 aa).

83–85 (VES) contributes to the substrate binding site. Residue 85-86 (SK) coordinates NADPH. The active-site Thioimide intermediate is the C184. The Proton donor role is filled by D191. 223–224 (HE) serves as a coordination point for substrate. Position 252–253 (252–253 (RG)) interacts with NADPH.

Belongs to the GTP cyclohydrolase I family. QueF type 2 subfamily. In terms of assembly, homodimer.

The protein resides in the cytoplasm. The catalysed reaction is 7-aminomethyl-7-carbaguanine + 2 NADP(+) = 7-cyano-7-deazaguanine + 2 NADPH + 3 H(+). The protein operates within tRNA modification; tRNA-queuosine biosynthesis. In terms of biological role, catalyzes the NADPH-dependent reduction of 7-cyano-7-deazaguanine (preQ0) to 7-aminomethyl-7-deazaguanine (preQ1). The protein is NADPH-dependent 7-cyano-7-deazaguanine reductase of Azotobacter vinelandii (strain DJ / ATCC BAA-1303).